A 484-amino-acid chain; its full sequence is GRIP domain-containing protein RUD3 (484 aa).

The segment covering 1 to 15 has biased composition (basic residues); the sequence is MGKNKKKTGKKAKSH. Residues 1 to 75 form a disordered region; it reads MGKNKKKTGK…GVDKQKVNDG (75 aa). Over residues 16–30 the composition is skewed to basic and acidic residues; the sequence is PHVEDVDETVNKPEE. Phosphoserine occurs at positions 55 and 64. The segment covering 61–72 has biased composition (basic and acidic residues); that stretch reads KDLSEGVDKQKV. The stretch at 84–383 forms a coiled coil; it reads LEDKKAGDEM…LQIGKLRHEA (300 aa). The 52-residue stretch at 401 to 452 folds into the GRIP domain; sequence SDSESVDKELISNLLISFVSIPRADPRKFEVLELLSNFLNWDEDKKQQAGLI. Residue serine 468 is modified to Phosphoserine.

It is found in the golgi apparatus lumen. Involved in the structural organization of the cis-Golgi and in vesicle targeting/fusion stages of ER to Golgi transport. The protein is GRIP domain-containing protein RUD3 (RUD3) of Saccharomyces cerevisiae (strain ATCC 204508 / S288c) (Baker's yeast).